The chain runs to 70 residues: Large ribosomal subunit protein bL31 (70 aa).

Residues Cys-16, Cys-18, Cys-37, and Cys-40 each coordinate Zn(2+).

Belongs to the bacterial ribosomal protein bL31 family. Type A subfamily. As to quaternary structure, part of the 50S ribosomal subunit. The cofactor is Zn(2+).

Its function is as follows. Binds the 23S rRNA. This is Large ribosomal subunit protein bL31 from Haemophilus influenzae (strain 86-028NP).